The sequence spans 217 residues: Small ribosomal subunit protein uS3 (217 aa).

One can recognise a KH type-2 domain in the interval 38–106 (IRKFINKELA…QVHINIIEIK (69 aa)).

This sequence belongs to the universal ribosomal protein uS3 family. As to quaternary structure, part of the 30S ribosomal subunit. Forms a tight complex with proteins S10 and S14.

Its function is as follows. Binds the lower part of the 30S subunit head. Binds mRNA in the 70S ribosome, positioning it for translation. The protein is Small ribosomal subunit protein uS3 of Streptococcus equi subsp. equi (strain 4047).